Consider the following 169-residue polypeptide: Probable inosine/xanthosine triphosphatase (169 aa).

7 to 12 lines the substrate pocket; the sequence is STNKAK. Residue Glu35 coordinates Mg(2+).

It belongs to the YjjX NTPase family. In terms of assembly, homodimer. The cofactor is Mg(2+). Mn(2+) is required as a cofactor.

The catalysed reaction is XTP + H2O = XDP + phosphate + H(+). The enzyme catalyses ITP + H2O = IDP + phosphate + H(+). Phosphatase that hydrolyzes non-canonical purine nucleotides such as XTP and ITP to their respective diphosphate derivatives. Probably excludes non-canonical purines from DNA/RNA precursor pool, thus preventing their incorporation into DNA/RNA and avoiding chromosomal lesions. This chain is Probable inosine/xanthosine triphosphatase, found in Sulfurisphaera tokodaii (strain DSM 16993 / JCM 10545 / NBRC 100140 / 7) (Sulfolobus tokodaii).